Here is a 537-residue protein sequence, read N- to C-terminus: Chaperonin GroEL (537 aa).

ATP is bound by residues 30-33 (TLGP), 87-91 (DGTTT), G414, 477-479 (DAV), and D493.

This sequence belongs to the chaperonin (HSP60) family. Forms a cylinder of 14 subunits composed of two heptameric rings stacked back-to-back. Interacts with the co-chaperonin GroES.

It localises to the cytoplasm. It catalyses the reaction ATP + H2O + a folded polypeptide = ADP + phosphate + an unfolded polypeptide.. In terms of biological role, together with its co-chaperonin GroES, plays an essential role in assisting protein folding. The GroEL-GroES system forms a nano-cage that allows encapsulation of the non-native substrate proteins and provides a physical environment optimized to promote and accelerate protein folding. This is Chaperonin GroEL from Coprothermobacter proteolyticus (strain ATCC 35245 / DSM 5265 / OCM 4 / BT).